Consider the following 83-residue polypeptide: Mitochondrial import inner membrane translocase subunit Tim8 (83 aa).

The Twin CX3C motif motif lies at 35–60 (CWDVCFSDYRPPSKMDGKTQTCIQNC). 2 disulfides stabilise this stretch: Cys-35–Cys-60 and Cys-39–Cys-56.

It belongs to the small Tim family. In terms of assembly, heterohexamer; composed of 3 copies of ddp-1/tim-8 and 3 copies of tin-13/tim-13, named soluble 70 kDa complex. Associates with the TIM22 complex, whose core is composed of tim-22.

The protein localises to the mitochondrion inner membrane. Mitochondrial intermembrane chaperone that participates in the import and insertion of some multi-pass transmembrane proteins into the mitochondrial inner membrane. Also required for the transfer of beta-barrel precursors from the TOM complex to the sorting and assembly machinery (SAM complex) of the outer membrane. Acts as a chaperone-like protein that protects the hydrophobic precursors from aggregation and guide them through the mitochondrial intermembrane space. The ddp-1/tim-8-tim-13 complex mediates the import of some proteins while the predominant tim-9/tin-9.1-tim-10/tin-10 70 kDa complex mediates the import of much more proteins. The chain is Mitochondrial import inner membrane translocase subunit Tim8 from Caenorhabditis briggsae.